A 345-amino-acid chain; its full sequence is Annexin A9 (345 aa).

Annexin repeat units lie at residues 41–112 (FSAD…ALLQ), 113–184 (PAAH…ALAK), 197–266 (NLAA…NLAS), and 270–341 (NTPL…ALCR).

The protein belongs to the annexin family. In terms of assembly, homodimer.

Functionally, may act as a low affinity receptor for acetylcholine. This chain is Annexin A9 (ANXA9), found in Bos taurus (Bovine).